The chain runs to 352 residues: Endophilin-A1 (352 aa).

The interval 1 to 21 (MSVAGLKKQFHKATQKVSEKV) is membrane-binding amphipathic helix. The interval 1-27 (MSVAGLKKQFHKATQKVSEKVGGAEGT) is disordered. The binds and tubulates liposomes stretch occupies residues 1–125 (MSVAGLKKQF…EVGEAMRELS (125 aa)). The BAR domain occupies 18 to 249 (SEKVGGAEGT…LEERIRQASS (232 aa)). The tract at residues 60-87 (PNPASRAKLSMINTMSKIRGQEKGPGYP) is required for dimerization upon membrane association. Residues 181 to 248 (EELRQALEKF…RLEERIRQAS (68 aa)) are a coiled coil. S262 bears the Phosphoserine mark. The tract at residues 264–289 (EFATGDSTQPNGGLSHTGTPKPPGVQ) is disordered. The segment covering 268-281 (GDSTQPNGGLSHTG) has biased composition (polar residues). In terms of domain architecture, SH3 spans 290 to 349 (MDQPCCRALYDFEPENEGELGFKEGDIITLTNQIDENWYEGMLHGQSGFFPINYVEILVA). Y299 carries the phosphotyrosine modification.

This sequence belongs to the endophilin family. In terms of assembly, monomer; in cytoplasm. Homodimer; when associated with membranes. Interacts with SYNJ1. Interacts with DNM1. Interacts with MAP4K3; the interaction appears to regulate MAP4K3-mediated JNK activation. Interacts with OPHN1. Interacts with PDCD6IP. Interacts with BIN2. Interacts with ATXN2. Interacts with ADAM9 and ADAM15 cytoplasmic tails. Interacts with TMEM108. Interacts with ADGRB2.

The protein localises to the cytoplasm. It is found in the membrane. The protein resides in the early endosome. It localises to the presynapse. Implicated in synaptic vesicle endocytosis. May recruit other proteins to membranes with high curvature. Required for BDNF-dependent dendrite outgrowth. Cooperates with SH3GL2 to mediate BDNF-NTRK2 early endocytic trafficking and signaling from early endosomes. The polypeptide is Endophilin-A1 (Sh3gl2) (Mus musculus (Mouse)).